A 318-amino-acid polypeptide reads, in one-letter code: D-alanine--D-alanine ligase B (318 aa).

The ATP-grasp domain occupies 117 to 315 (KQVWLSLGLS…FEALVWRVLE (199 aa)). 146–201 (AEQIGLPVIVKPANEGSSVGVSRVFDQAQLDEAVTLAARYDGALLMEQLIEGDELT) contributes to the ATP binding site. The Mg(2+) site is built by Asp268, Glu282, and Asn284.

Belongs to the D-alanine--D-alanine ligase family. Mg(2+) is required as a cofactor. Requires Mn(2+) as cofactor.

It localises to the cytoplasm. It catalyses the reaction 2 D-alanine + ATP = D-alanyl-D-alanine + ADP + phosphate + H(+). It participates in cell wall biogenesis; peptidoglycan biosynthesis. Cell wall formation. The polypeptide is D-alanine--D-alanine ligase B (Xanthomonas campestris pv. campestris (strain ATCC 33913 / DSM 3586 / NCPPB 528 / LMG 568 / P 25)).